Consider the following 314-residue polypeptide: Dihydroorotate dehydrogenase (fumarate) (314 aa).

Residues K46, 70-74, and N130 contribute to the substrate site; that span reads NSMGL. 46–47 is an FMN binding site; that stretch reads KS. N130 serves as a coordination point for FMN. Residues S132 and C133 each act as nucleophile in the active site. FMN is bound by residues K167 and I195. Substrate is bound at residue 196 to 197; the sequence is NS. FMN is bound by residues G224, 252–253, and 274–275; these read GG and GT.

The protein belongs to the dihydroorotate dehydrogenase family. Type 1 subfamily. Homodimer. It depends on FMN as a cofactor.

Its subcellular location is the cytoplasm. It carries out the reaction (S)-dihydroorotate + fumarate = orotate + succinate. It functions in the pathway pyrimidine metabolism; UMP biosynthesis via de novo pathway. The activity is independent of the presence of oxygen. In terms of biological role, catalyzes the conversion of dihydroorotate to orotate with fumarate as the electron acceptor. This is Dihydroorotate dehydrogenase (fumarate) (URA1) from Lachancea kluyveri (strain ATCC 58438 / CBS 3082 / BCRC 21498 / NBRC 1685 / JCM 7257 / NCYC 543 / NRRL Y-12651) (Yeast).